We begin with the raw amino-acid sequence, 272 residues long: uncharacterized protein (272 aa).

The HTH merR-type domain maps to 1-27 (MDTLAFINRALVEEGYSLKDIKLVLIT).

This is an uncharacterized protein from Aquifex aeolicus (strain VF5).